The sequence spans 241 residues: Caffeoyl-CoA O-methyltransferase (241 aa).

Methionine 1 carries the blocked amino end (Met) modification. Position 15 (lysine 15) interacts with substrate. Residues threonine 57, glutamate 79, 81-82, serine 87, aspartate 105, and alanine 134 contribute to the S-adenosyl-L-methionine site; that span reads GV. Substrate is bound at residue aspartate 157. Aspartate 157 provides a ligand contact to a divalent metal cation. Residue aspartate 159 coordinates S-adenosyl-L-methionine. Aspartate 183 and asparagine 184 together coordinate a divalent metal cation. Residue asparagine 188 participates in substrate binding.

Belongs to the class I-like SAM-binding methyltransferase superfamily. Cation-dependent O-methyltransferase family. CCoAMT subfamily. In terms of assembly, homodimer. The cofactor is a divalent metal cation. In terms of tissue distribution, roots and leaves.

It catalyses the reaction (E)-caffeoyl-CoA + S-adenosyl-L-methionine = (E)-feruloyl-CoA + S-adenosyl-L-homocysteine + H(+). The protein operates within aromatic compound metabolism; phenylpropanoid biosynthesis. Functionally, methylates caffeoyl-CoA to feruloyl-CoA and 5-hydroxyferuloyl-CoA to sinapoyl-CoA. Plays a role in the synthesis of feruloylated polysaccharides. Involved in the reinforcement of the plant cell wall. Also involved in the responding to wounding or pathogen challenge by the increased formation of cell wall-bound ferulic acid polymers. The sequence is that of Caffeoyl-CoA O-methyltransferase from Petroselinum crispum (Parsley).